A 696-amino-acid polypeptide reads, in one-letter code: Elongation factor G (696 aa).

Positions 8–282 constitute a tr-type G domain; it reads DRTRNIGIMA…AVIDYLPSPL (275 aa). GTP contacts are provided by residues 17 to 24, 81 to 85, and 135 to 138; these read AHIDAGKT, DTPGH, and NKMD.

This sequence belongs to the TRAFAC class translation factor GTPase superfamily. Classic translation factor GTPase family. EF-G/EF-2 subfamily.

Its subcellular location is the cytoplasm. In terms of biological role, catalyzes the GTP-dependent ribosomal translocation step during translation elongation. During this step, the ribosome changes from the pre-translocational (PRE) to the post-translocational (POST) state as the newly formed A-site-bound peptidyl-tRNA and P-site-bound deacylated tRNA move to the P and E sites, respectively. Catalyzes the coordinated movement of the two tRNA molecules, the mRNA and conformational changes in the ribosome. The protein is Elongation factor G of Staphylococcus saprophyticus subsp. saprophyticus (strain ATCC 15305 / DSM 20229 / NCIMB 8711 / NCTC 7292 / S-41).